Here is a 543-residue protein sequence, read N- to C-terminus: Zinc finger protein tra-4 (543 aa).

A disordered region spans residues 1 to 38; it reads MDDPNQCTIKQEDSITRPRPTEAPTIQNLKQEPAIEEG. Residues 10 to 20 are compositionally biased toward basic and acidic residues; sequence KQEDSITRPRP. 7 C2H2-type zinc fingers span residues 218-241, 327-350, 381-406, 413-436, 442-464, 470-493, and 495-518; these read VRCKKCKNRFIEKNIYERHLRDKH, PQCPFCDKRFRNEFSLKKHFAKKH, YVCFECTPIRNLCTDNRLLNHRKKFH, FRCSFCNMKFLTPRKLRKHKKMSH, FQCHFCEEIFISEVAVMTHERMH, FECKVCDFRANRYTAMEEHKRDEH, and YVCAICHERHAEYPEMKHHVYEEH.

It belongs to the krueppel C2H2-type zinc-finger protein family. Interacts with histone deacetylase hda-1. May interact with nasp-1.

It localises to the nucleus. Functionally, probable transcription factor. Promotes normal hermaphrodite (XX) development, in concert with histone deacetylase hda-1 and nasp-1, perhaps as components of a complex. May cooperate with transcription factor tra-1 to repress male-specific genes in hermaphrodites. Synthetic multivulva (synMuv) class B protein, required to repress the induction of vulval development by let-60 Ras signaling. In Caenorhabditis elegans, this protein is Zinc finger protein tra-4.